Consider the following 935-residue polypeptide: Protein translocase subunit SecA (935 aa).

ATP-binding positions include glutamine 90, 108–112, and aspartate 504; that span reads GEGKT.

This sequence belongs to the SecA family. Monomer and homodimer. Part of the essential Sec protein translocation apparatus which comprises SecA, SecYEG and auxiliary proteins SecDF. Other proteins may also be involved.

The protein localises to the cell inner membrane. Its subcellular location is the cellular thylakoid membrane. The protein resides in the cytoplasm. It carries out the reaction ATP + H2O + cellular proteinSide 1 = ADP + phosphate + cellular proteinSide 2.. In terms of biological role, part of the Sec protein translocase complex. Interacts with the SecYEG preprotein conducting channel. Has a central role in coupling the hydrolysis of ATP to the transfer of proteins into and across the cell membrane, serving as an ATP-driven molecular motor driving the stepwise translocation of polypeptide chains across the membrane. Functionally, probably participates in protein translocation into and across both the cytoplasmic and thylakoid membranes in cyanobacterial cells. This chain is Protein translocase subunit SecA, found in Gloeothece citriformis (strain PCC 7424) (Cyanothece sp. (strain PCC 7424)).